Reading from the N-terminus, the 28-residue chain is Beta-bungarotoxin B chain-like (28 aa).

The N-terminal stretch at 1-24 (MSSGGLLLLLGLLTLCAELTPVSS) is a signal peptide.

Heterodimer; disulfide-linked. The A chains have phospholipase A2 activity and the B chains show homology with the basic protease inhibitors. In terms of tissue distribution, expressed by the venom gland.

The protein resides in the secreted. Functionally, beta-1-bungarotoxin is a presynaptic neurotoxin of the venom. The B chain is homologous to venom basic protease inhibitors but has no protease inhibitor activity and blocks voltage-gated potassium channels (Kv). This chain is Beta-bungarotoxin B chain-like, found in Bungarus multicinctus (Many-banded krait).